A 651-amino-acid polypeptide reads, in one-letter code: Acetyl-coenzyme A synthetase (651 aa).

CoA-binding positions include 190–193 (RGGR), T309, and N333. ATP contacts are provided by residues 385–387 (GEP), 409–414 (DTWWQT), D498, and R513. S521 is a CoA binding site. R524 provides a ligand contact to ATP. The Mg(2+) site is built by V535, H537, and V540. R582 lines the CoA pocket. K607 is subject to N6-acetyllysine.

It belongs to the ATP-dependent AMP-binding enzyme family. Mg(2+) serves as cofactor. Post-translationally, acetylated. Deacetylation by the SIR2-homolog deacetylase activates the enzyme.

It carries out the reaction acetate + ATP + CoA = acetyl-CoA + AMP + diphosphate. In terms of biological role, catalyzes the conversion of acetate into acetyl-CoA (AcCoA), an essential intermediate at the junction of anabolic and catabolic pathways. AcsA undergoes a two-step reaction. In the first half reaction, AcsA combines acetate with ATP to form acetyl-adenylate (AcAMP) intermediate. In the second half reaction, it can then transfer the acetyl group from AcAMP to the sulfhydryl group of CoA, forming the product AcCoA. This chain is Acetyl-coenzyme A synthetase, found in Xanthobacter autotrophicus (strain ATCC BAA-1158 / Py2).